We begin with the raw amino-acid sequence, 521 residues long: Bifunctional purine biosynthesis protein PurH (521 aa).

The MGS-like domain occupies 1–147; that stretch reads MAKITRALIS…KNNADVTVVV (147 aa).

The protein belongs to the PurH family.

The catalysed reaction is (6R)-10-formyltetrahydrofolate + 5-amino-1-(5-phospho-beta-D-ribosyl)imidazole-4-carboxamide = 5-formamido-1-(5-phospho-D-ribosyl)imidazole-4-carboxamide + (6S)-5,6,7,8-tetrahydrofolate. It carries out the reaction IMP + H2O = 5-formamido-1-(5-phospho-D-ribosyl)imidazole-4-carboxamide. Its pathway is purine metabolism; IMP biosynthesis via de novo pathway; 5-formamido-1-(5-phospho-D-ribosyl)imidazole-4-carboxamide from 5-amino-1-(5-phospho-D-ribosyl)imidazole-4-carboxamide (10-formyl THF route): step 1/1. It functions in the pathway purine metabolism; IMP biosynthesis via de novo pathway; IMP from 5-formamido-1-(5-phospho-D-ribosyl)imidazole-4-carboxamide: step 1/1. This is Bifunctional purine biosynthesis protein PurH from Geotalea uraniireducens (strain Rf4) (Geobacter uraniireducens).